We begin with the raw amino-acid sequence, 60 residues long: Large ribosomal subunit protein uL30 (60 aa).

The protein belongs to the universal ribosomal protein uL30 family. In terms of assembly, part of the 50S ribosomal subunit.

This is Large ribosomal subunit protein uL30 from Streptomyces filamentosus (Streptomyces roseosporus).